A 20-amino-acid chain; its full sequence is Snaclec ophioluxin subunit alpha (20 aa).

Cys4 and Cys15 are joined by a disulfide. Residues 11–20 enclose the C-type lectin domain; that stretch reads YDQHCYRIIN.

Belongs to the snaclec family. As to quaternary structure, heterodimer of subunits alpha and beta; disulfide-linked. Expressed by the venom gland.

The protein localises to the secreted. In terms of biological role, binds to the platelet and collagen receptor glycoprotein VI (GP6) and activates platelet aggregation. The chain is Snaclec ophioluxin subunit alpha from Ophiophagus hannah (King cobra).